Consider the following 761-residue polypeptide: Xaa-Pro dipeptidyl-peptidase (761 aa).

Active-site charge relay system residues include Ser349, Asp469, and His499.

Belongs to the peptidase S15 family. As to quaternary structure, homodimer.

It localises to the cytoplasm. The catalysed reaction is Hydrolyzes Xaa-Pro-|- bonds to release unblocked, N-terminal dipeptides from substrates including Ala-Pro-|-p-nitroanilide and (sequentially) Tyr-Pro-|-Phe-Pro-|-Gly-Pro-|-Ile.. Its function is as follows. Removes N-terminal dipeptides sequentially from polypeptides having unsubstituted N-termini provided that the penultimate residue is proline. This chain is Xaa-Pro dipeptidyl-peptidase, found in Streptococcus equi subsp. equi (strain 4047).